The sequence spans 400 residues: NADH-quinone oxidoreductase subunit D (400 aa).

The protein belongs to the complex I 49 kDa subunit family. NDH-1 is composed of 14 different subunits. Subunits NuoB, C, D, E, F, and G constitute the peripheral sector of the complex.

Its subcellular location is the cell inner membrane. It carries out the reaction a quinone + NADH + 5 H(+)(in) = a quinol + NAD(+) + 4 H(+)(out). NDH-1 shuttles electrons from NADH, via FMN and iron-sulfur (Fe-S) centers, to quinones in the respiratory chain. The immediate electron acceptor for the enzyme in this species is believed to be a menaquinone. Couples the redox reaction to proton translocation (for every two electrons transferred, four hydrogen ions are translocated across the cytoplasmic membrane), and thus conserves the redox energy in a proton gradient. This chain is NADH-quinone oxidoreductase subunit D, found in Chlorobium phaeovibrioides (strain DSM 265 / 1930) (Prosthecochloris vibrioformis (strain DSM 265)).